A 281-amino-acid chain; its full sequence is Insulin-like growth factor-binding protein 7 (281 aa).

An N-terminal signal peptide occupies residues 1-25; it reads MERPPRALLLGAAGLLLLLLPLSSS. Positions 27–113 constitute an IGFBP N-terminal domain; it reads SSDACGPCVP…PATLAVCVCK (87 aa). Disulfide bonds link Cys-31-Cys-56, Cys-34-Cys-58, Cys-39-Cys-59, Cys-47-Cys-62, Cys-70-Cys-86, Cys-80-Cys-110, Cys-112-Cys-130, and Cys-119-Cys-155. The region spanning 98–157 is the Kazal-like domain; it reads GAAAGGPATLAVCVCKSRYPVCGSNGITYPSGCQLRAASLRAESRGEKAITQVSKGTCEQ. Residues 159 to 263 form the Ig-like C2-type domain; the sequence is PSIVTPPKDI…GQASAAAKIT (105 aa). The N-linked (GlcNAc...) asparagine glycan is linked to Asn-170. The cysteines at positions 180 and 247 are disulfide-linked. Ser-238 is modified (phosphoserine).

In terms of assembly, may interact with VPS24/CHMP3; the relevance of such interaction however remains unclear. Interacts with CD93; this interaction plays a role in endothelial cells angiogenesis. Post-translationally, N-glycosylated. As to expression, expressed at high levels in lung, kidney, small intestine, testis and uterus and at moderate levels in liver.

The protein resides in the secreted. Its function is as follows. Binds IGF1 and IGF2 with a relatively low affinity. Stimulates prostacyclin (PGI2) production. Stimulates cell adhesion. Acts as a ligand for CD93 to play a role in angiogenesis. This is Insulin-like growth factor-binding protein 7 (Igfbp7) from Mus musculus (Mouse).